A 314-amino-acid chain; its full sequence is NF-kappa-B inhibitor alpha (314 aa).

The tract at residues 1–40 (MFQPAGHGQDWAMEGPRDGLKKERLVDDRHDSGLDSMKDE) is disordered. Basic and acidic residues predominate over residues 15–40 (GPRDGLKKERLVDDRHDSGLDSMKDE). K21 participates in a covalent cross-link: Glycyl lysine isopeptide (Lys-Gly) (interchain with G-Cter in SUMO); alternate. A Glycyl lysine isopeptide (Lys-Gly) (interchain with G-Cter in ubiquitin); alternate cross-link involves residue K21. K22 participates in a covalent cross-link: Glycyl lysine isopeptide (Lys-Gly) (interchain with G-Cter in ubiquitin). The Destruction motif motif lies at 30-36 (HDSGLDS). The residue at position 32 (S32) is a Phosphoserine; by IKKB. S36 bears the Phosphoserine; by IKKA, IKKB, IKKE and TBK1 mark. Y42 carries the phosphotyrosine modification. Residues 45–54 (MVKELREIRL) carry the Nuclear export signal motif. ANK repeat units lie at residues 73–103 (DGDS…DLAF), 110–139 (LQQT…DPEL), 143–172 (RGNT…PQHL), 182–211 (NGHT…DVNA), and 216–245 (NGRT…DVNR). The short motif at 110–120 (LQQTPLHLAVI) is the Nuclear import signal element. 2 positions are modified to (3S)-3-hydroxyasparagine; by HIF1AN: N210 and N244. A phosphoserine; by CK2 mark is found at S283 and S288. T291 bears the Phosphothreonine; by CK2 mark. A Phosphoserine; by CK2 modification is found at S293. T296 carries the phosphothreonine modification.

This sequence belongs to the NF-kappa-B inhibitor family. Interacts with RELA; the interaction requires the nuclear import signal. Part of a 70-90 kDa complex at least consisting of CHUK, IKBKB, NFKBIA, RELA, ELP1 and MAP3K14. Interacts with NKIRAS1 and NKIRAS2. Interacts with RWDD3; the interaction enhances sumoylation. Interacts with PRMT2. Interacts with PRKACA in platelets; this interaction is disrupted by thrombin and collagen. Interacts with MEFV. Interacts with DDRGK1; positively regulates NFKBIA phosphorylation and degradation. Interacts with HNRNPA2B1; the interaction may be mediated by the RRM2 domain of HNRNPA2B1, and HNRNPA2B1 may interact simultaneously with FAM76B and either NFKBIA or NFKBIE to form a complex. In terms of processing, phosphorylated at Ser-32 and Ser-36 by IKKA/CHUK and IKKB/IKBKB; disables inhibition of NF-kappa-B DNA-binding activity. Phosphorylation at positions 32 and 36 is prerequisite to recognition by the SCF(FBXW11) and SCF(BTRC) complexes, leading to polyubiquitination and subsequent degradation. Polyubiquitinated at Lys-21 and/or Lys-22 following phosphorylation at Ser-32 and Ser-36. Monoubiquitinated at Lys-21 and/or Lys-22 by UBE2D3. Ubiquitin chain elongation is then performed by CDC34 in cooperation with the SCF(FBXW11) E3 ligase complex, building ubiquitin chains from the UBE2D3-primed NFKBIA-linked ubiquitin. The resulting polyubiquitination leads to protein degradation. Also ubiquitinated by the SCF(BTRC) complex following stimulus-dependent phosphorylation at Ser-32 and Ser-36. Deubiquitinated by USP38, leading to NF-kappa-B inhibition. Post-translationally, sumoylated; sumoylation requires the presence of the nuclear import signal. Sumoylation blocks ubiquitination and proteasome-mediated degradation of the protein thereby increasing the protein stability. In terms of processing, hydroxylated by HIF1AN. Highly expressed in lymph node, thymus followed by liver, brain, muscle, kidney, gastrointestinal and reproductive tract.

It localises to the cytoplasm. The protein localises to the nucleus. Its function is as follows. Inhibits the activity of dimeric NF-kappa-B/REL complexes by trapping REL (RELA/p65 and NFKB1/p50) dimers in the cytoplasm by masking their nuclear localization signals. On cellular stimulation by immune and pro-inflammatory responses, becomes phosphorylated promoting ubiquitination and degradation, enabling the dimeric RELA to translocate to the nucleus and activate transcription. The chain is NF-kappa-B inhibitor alpha (Nfkbia) from Mus musculus (Mouse).